Reading from the N-terminus, the 158-residue chain is MQKLLLAVLFFSLLAIATARPKYHKQGRRKGDACRLHCLFDNIVCETPCRVLFRSRFSYHVCARDCRKDRVDCYIGCKNIDANPKAEAEPGSLDKEAGTKGEKEKNGKKEKKEKKEKGEYAIGNAESGTGSSGGSNKTHDDDDDDHDDVYENDDENEE.

Residues 1–19 form the signal peptide; that stretch reads MQKLLLAVLFFSLLAIATA. Residues 82–158 are disordered; sequence ANPKAEAEPG…VYENDDENEE (77 aa). Positions 84-107 are enriched in basic and acidic residues; sequence PKAEAEPGSLDKEAGTKGEKEKNG. Residues 141–158 are compositionally biased toward acidic residues; that stretch reads DDDDDHDDVYENDDENEE.

Prismatic layer of shell (at protein level). Expressed primarily in the mantle with highest level in the mantle edge and lower level in the mantle pallium.

Its subcellular location is the secreted. This is an uncharacterized protein from Pinctada maxima (Silver-lipped pearl oyster).